The chain runs to 264 residues: Protein hob3 (264 aa).

In terms of domain architecture, BAR spans 17 to 237; sequence VMMKTGHVER…FDNSVREDYS (221 aa). Coiled coils occupy residues 25–65 and 165–187; these read ERTV…AMTA and RTEK…LVSE.

It is found in the cytoplasm. The protein resides in the cytoskeleton. Its function is as follows. Involved in cytokinesis and septation where it has a role in the localization of F-actin. In Schizosaccharomyces pombe (strain 972 / ATCC 24843) (Fission yeast), this protein is Protein hob3 (hob3).